A 331-amino-acid polypeptide reads, in one-letter code: Cytoplasmic envelopment protein 1 (331 aa).

Belongs to the herpesviridae cytoplasmic envelopment protein 1 family. Interacts with protein ORF7; this interaction localizes protein ORF53 to the host trans-Golgi network (TGN).

It localises to the virion. Its subcellular location is the virion tegument. The protein resides in the host cytoplasm. It is found in the host Golgi apparatus. Functionally, plays a critical role in cytoplasmic virus egress. Participates in the final step of tegumentation and envelope acquisition within the host cytoplasm. This Varicella-zoster virus (strain Dumas) (HHV-3) protein is Cytoplasmic envelopment protein 1 (ORF53).